A 91-amino-acid chain; its full sequence is Small ribosomal subunit protein uS15 (91 aa).

It belongs to the universal ribosomal protein uS15 family. In terms of assembly, part of the 30S ribosomal subunit. Forms a bridge to the 50S subunit in the 70S ribosome, contacting the 23S rRNA.

One of the primary rRNA binding proteins, it binds directly to 16S rRNA where it helps nucleate assembly of the platform of the 30S subunit by binding and bridging several RNA helices of the 16S rRNA. In terms of biological role, forms an intersubunit bridge (bridge B4) with the 23S rRNA of the 50S subunit in the ribosome. The chain is Small ribosomal subunit protein uS15 from Rickettsia akari (strain Hartford).